The sequence spans 353 residues: D-alanine--D-alanine ligase (353 aa).

The region spanning 141 to 349 (KAAFAAAGLS…LPQLVAELVD (209 aa)) is the ATP-grasp domain. 176-231 (EQELGYPCFVKPANLGSSVGITKANNRDELLAGLHQAAALDPRLLVEQGVNARELE) provides a ligand contact to ATP. Residues D302, E316, and N318 each contribute to the Mg(2+) site.

The protein belongs to the D-alanine--D-alanine ligase family. Requires Mg(2+) as cofactor. Mn(2+) serves as cofactor.

The protein resides in the cytoplasm. The enzyme catalyses 2 D-alanine + ATP = D-alanyl-D-alanine + ADP + phosphate + H(+). It functions in the pathway cell wall biogenesis; peptidoglycan biosynthesis. In terms of biological role, cell wall formation. The protein is D-alanine--D-alanine ligase of Synechococcus sp. (strain WH7803).